Consider the following 274-residue polypeptide: Large ribosomal subunit protein uL2 (274 aa).

The tract at residues 221–254 (RGTAMNPADHPHGGGEGRTFGKHPVSPWGLPTKG) is disordered.

Belongs to the universal ribosomal protein uL2 family. Part of the 50S ribosomal subunit. Forms a bridge to the 30S subunit in the 70S ribosome.

Its function is as follows. One of the primary rRNA binding proteins. Required for association of the 30S and 50S subunits to form the 70S ribosome, for tRNA binding and peptide bond formation. It has been suggested to have peptidyltransferase activity; this is somewhat controversial. Makes several contacts with the 16S rRNA in the 70S ribosome. The chain is Large ribosomal subunit protein uL2 from Sulfurihydrogenibium sp. (strain YO3AOP1).